The chain runs to 319 residues: MNHKKVVIIGSGPAAHTAAIYLARAEIKPTMYEGMLANGIAAGGQLTTTTEIENFPGFPDGMTGSELMDRMRAQSTKFGTEIITETIAKVDLSSRPFKLWTEFNEDGEPITTDAIVIATGASAKRLHIPGEETYWQQGISACAVCDGAVPIFRNKPLAVIGGGDSACEEAQFLTKYGSKVYLIVRKDHLRASTIMQRRAEQNDKIEILYNTVTLEAQGDGKLLNNLRIKNVKTNEETDLPVNGLFYAIGHTPATKIVEGQVETDETGYIKTIPGSSLTSVPGVFAAGDVQDSKYRQAITSAGSGCMAGLDAEKYLTELE.

Residues 11 to 14 (SGPA), 40 to 41 (IA), glutamine 45, asparagine 54, cysteine 145, aspartate 288, and 295 to 297 (RQA) each bind FAD. A disulfide bridge links cysteine 142 with cysteine 145.

The protein belongs to the class-II pyridine nucleotide-disulfide oxidoreductase family. As to quaternary structure, homodimer. Requires FAD as cofactor.

The protein localises to the cytoplasm. The catalysed reaction is [thioredoxin]-dithiol + NADP(+) = [thioredoxin]-disulfide + NADPH + H(+). The sequence is that of Thioredoxin reductase (TRR1) from Candida glabrata (strain ATCC 2001 / BCRC 20586 / JCM 3761 / NBRC 0622 / NRRL Y-65 / CBS 138) (Yeast).